A 323-amino-acid chain; its full sequence is tRNA U34 carboxymethyltransferase (323 aa).

Carboxy-S-adenosyl-L-methionine-binding positions include lysine 91, tryptophan 105, lysine 110, glycine 130, 152–154, 181–182, methionine 196, tyrosine 200, and arginine 315; these read DPT and IE.

This sequence belongs to the class I-like SAM-binding methyltransferase superfamily. CmoB family. Homotetramer.

It catalyses the reaction carboxy-S-adenosyl-L-methionine + 5-hydroxyuridine(34) in tRNA = 5-carboxymethoxyuridine(34) in tRNA + S-adenosyl-L-homocysteine + H(+). Its function is as follows. Catalyzes carboxymethyl transfer from carboxy-S-adenosyl-L-methionine (Cx-SAM) to 5-hydroxyuridine (ho5U) to form 5-carboxymethoxyuridine (cmo5U) at position 34 in tRNAs. In Shigella flexneri serotype 5b (strain 8401), this protein is tRNA U34 carboxymethyltransferase.